The chain runs to 230 residues: Urease accessory protein UreF (230 aa).

This sequence belongs to the UreF family. In terms of assembly, ureD, UreF and UreG form a complex that acts as a GTP-hydrolysis-dependent molecular chaperone, activating the urease apoprotein by helping to assemble the nickel containing metallocenter of UreC. The UreE protein probably delivers the nickel.

Its subcellular location is the cytoplasm. Functionally, required for maturation of urease via the functional incorporation of the urease nickel metallocenter. The chain is Urease accessory protein UreF from Marinomonas sp. (strain MWYL1).